Here is a 139-residue protein sequence, read N- to C-terminus: Small ribosomal subunit protein bS6 (139 aa).

The tract at residues Thr97–Glu139 is disordered. Over residues Lys104–Glu139 the composition is skewed to basic and acidic residues.

Belongs to the bacterial ribosomal protein bS6 family.

In terms of biological role, binds together with bS18 to 16S ribosomal RNA. The protein is Small ribosomal subunit protein bS6 of Shewanella sediminis (strain HAW-EB3).